Reading from the N-terminus, the 238-residue chain is Ribonuclease 3 (238 aa).

Positions 4 to 130 (IQTLFQTLNI…LFGAIYLDLG (127 aa)) constitute an RNase III domain. Glu45 lines the Mg(2+) pocket. Asp49 is an active-site residue. 2 residues coordinate Mg(2+): Asp116 and Glu119. The active site involves Glu119. The 69-residue stretch at 154 to 222 (DFKTQLQEIV…AQQALSKVAK (69 aa)) folds into the DRBM domain. Positions 215–238 (QALSKVAKPKDLLNNKGGKEKELQ) are disordered. Residues 222-238 (KPKDLLNNKGGKEKELQ) are compositionally biased toward basic and acidic residues.

It belongs to the ribonuclease III family. As to quaternary structure, homodimer. It depends on Mg(2+) as a cofactor.

The protein localises to the cytoplasm. The enzyme catalyses Endonucleolytic cleavage to 5'-phosphomonoester.. Digests double-stranded RNA. Involved in the processing of primary rRNA transcript to yield the immediate precursors to the large and small rRNAs (23S and 16S). Processes some mRNAs, and tRNAs when they are encoded in the rRNA operon. Processes pre-crRNA and tracrRNA of type II CRISPR loci if present in the organism. The chain is Ribonuclease 3 from Onion yellows phytoplasma (strain OY-M).